The chain runs to 353 residues: Protein arginine N-methyltransferase 1 (353 aa).

The 322-residue stretch at 32–353 (KDYYFDSYAH…LSCSTDYRMR (322 aa)) folds into the SAM-dependent MTase PRMT-type domain. Histidine 45, arginine 54, glycine 78, and glutamate 100 together coordinate S-adenosyl-L-methionine. Lysine 116 is subject to N6-succinyllysine. A Glycyl lysine isopeptide (Lys-Gly) (interchain with G-Cter in ubiquitin) cross-link involves residue lysine 127. Residue glutamate 129 coordinates S-adenosyl-L-methionine. Residues glutamate 144 and glutamate 153 contribute to the active site. Residues lysine 210 and lysine 215 each carry the N6-acetyllysine modification. Serine 286 and serine 289 each carry phosphoserine.

It belongs to the class I-like SAM-binding methyltransferase superfamily. Protein arginine N-methyltransferase family. As to quaternary structure, homodimer and heterodimer with PRMT8. Homooctamer; individual homodimers associates to form a homooctamer. Interacts with NFATC2IP. Interacts with ILF3 and SUPT5H. Individual homodimers can associate to form a homohexamer. Interacts with FOXO1; the interaction methylates FOXO1, retaining it in the nucleus and increasing its transcriptional activity. Methylation of FOXO1 is increased with oxidative stress. Interacts with CHTOP; the interaction methylates CHTOP, enabling its interaction with the 5FMC complex. Interacts with BTG1, BTG2 and IFNAR1. Interacts with and probably methylates ATXN2L. Component of the methylosome, a 20S complex containing at least CLNS1A/pICln, PRMT5/SKB1, WDR77/MEP50, PRMT1 and ERH. Interacts with DHX9 (via RGG region). Interacts (via N-terminus) with HABP4. Interacts with MAP3K5/ASK1; the interaction results in MAP3K5 methylation by PRMT1 which inhibits MAP3K5 activation. Interacts with TRIM48; the interaction results in ubiquitination of PRMT1 by TRIM48, leading to PRMT1 proteasomal degradation and activation of MAP3K5. Interacts with GATOR1 complex; this interaction is S-adenosyl-L-methionine (SAM) dependent and is perturbated by SAMTOR in a SAM-sensitive manner. Interacts with GFI1; promoting recognition and binding of MRE11 and TP53BP1 substrates by PRMT1. Post-translationally, polyubiquitinated at Lys-127 by the SCF(FBXL17) complex, leading to its subsequent degradation. Ubiquitination is regulated by acetylation at Lys-210 and Lys-215. Polyubiquitinated by E3 ubiquitin-protein ligase TRIM48, leading to suppression of MAP3K5/ASK1 methylation and subsequent MAP3K5 activation. Acetylation at Lys-210 and Lys-215 regulates ubiquitination by the SCF(FBXL17) complex. Acetylated at Lys-215 by p300/EP300. Deacetylated at Lys-210 and Lys-215 by SIRT1. Ubiquitous.

It is found in the nucleus. The protein localises to the nucleoplasm. It localises to the cytoplasm. Its subcellular location is the cytosol. The protein resides in the lysosome membrane. It carries out the reaction L-arginyl-[protein] + 2 S-adenosyl-L-methionine = N(omega),N(omega)-dimethyl-L-arginyl-[protein] + 2 S-adenosyl-L-homocysteine + 2 H(+). The enzyme catalyses L-arginyl-[protein] + S-adenosyl-L-methionine = N(omega)-methyl-L-arginyl-[protein] + S-adenosyl-L-homocysteine + H(+). The catalysed reaction is N(omega)-methyl-L-arginyl-[protein] + S-adenosyl-L-methionine = N(omega),N(omega)-dimethyl-L-arginyl-[protein] + S-adenosyl-L-homocysteine + H(+). In terms of biological role, arginine methyltransferase that methylates (mono and asymmetric dimethylation) the guanidino nitrogens of arginyl residues present in proteins such as ESR1, histone H2, H3 and H4, FMR1, ILF3, HNRNPA1, HNRNPD, NFATC2IP, SUPT5H, TAF15, EWS, HABP4, SERBP1, RBM15, FOXO1, CHTOP, MAP3K5/ASK1 and MICU1. Constitutes the main enzyme that mediates monomethylation and asymmetric dimethylation of histone H4 'Arg-3' (H4R3me1 and H4R3me2a, respectively), a specific tag for epigenetic transcriptional activation. May be involved in the regulation of TAF15 transcriptional activity, act as an activator of estrogen receptor (ER)-mediated transactivation, play a key role in neurite outgrowth and act as a negative regulator of megakaryocytic differentiation, by modulating p38 MAPK pathway. Methylates RBM15, promoting ubiquitination and degradation of RBM15. Methylates MRE11 and TP53BP1, promoting the DNA damage response. Methylates FOXO1 and retains it in the nucleus increasing its transcriptional activity. Methylates CHTOP and this methylation is critical for its 5-hydroxymethylcytosine (5hmC)-binding activity. Methylates MAP3K5/ASK1 at 'Arg-85' and 'Arg-87' which promotes association of MAP3K5 with thioredoxin and negatively regulates MAP3K5 association with TRAF2, inhibiting MAP3K5 stimulation and MAP3K5-induced activation of JNK. Methylates H4R3 in genes involved in glioblastomagenesis in a CHTOP- and/or TET1-dependent manner. Plays a role in regulating alternative splicing in the heart. Methylates NPRL2 at 'Arg-78' leading to inhibition of its GTPase activator activity and then the GATOR1 complex and consequently inducing timely mTORC1 activation under methionine-sufficient conditions. The polypeptide is Protein arginine N-methyltransferase 1 (Rattus norvegicus (Rat)).